The sequence spans 331 residues: ADP-L-glycero-D-manno-heptose-6-epimerase (331 aa).

NADP(+)-binding positions include 11-12, 32-33, K39, K54, 75-79, and N92; these read FI, DN, and EGACS. The active-site Proton acceptor is the Y139. K143 contributes to the NADP(+) binding site. N168 is a binding site for substrate. Positions 169 and 177 each coordinate NADP(+). K177 functions as the Proton acceptor in the catalytic mechanism. Substrate is bound by residues R179, H186, 200–203, R213, and Y292; that span reads FGEY.

It belongs to the NAD(P)-dependent epimerase/dehydratase family. HldD subfamily. In terms of assembly, homopentamer. Requires NADP(+) as cofactor.

The enzyme catalyses ADP-D-glycero-beta-D-manno-heptose = ADP-L-glycero-beta-D-manno-heptose. The protein operates within nucleotide-sugar biosynthesis; ADP-L-glycero-beta-D-manno-heptose biosynthesis; ADP-L-glycero-beta-D-manno-heptose from D-glycero-beta-D-manno-heptose 7-phosphate: step 4/4. Catalyzes the interconversion between ADP-D-glycero-beta-D-manno-heptose and ADP-L-glycero-beta-D-manno-heptose via an epimerization at carbon 6 of the heptose. This chain is ADP-L-glycero-D-manno-heptose-6-epimerase, found in Cupriavidus necator (strain ATCC 17699 / DSM 428 / KCTC 22496 / NCIMB 10442 / H16 / Stanier 337) (Ralstonia eutropha).